We begin with the raw amino-acid sequence, 667 residues long: Homeobox protein 3 (667 aa).

Disordered regions lie at residues 44–108, 179–232, 249–268, and 331–418; these read FFQP…NSSI, NNNN…TVYN, NNNNLNLTNNNNNKNSVNNN, and STNK…YQKQ. The span at 52 to 63 shows a compositional bias: pro residues; it reads LPPPTNQQPQPQ. The span at 75–96 shows a compositional bias: polar residues; sequence CNSSFENSPQQPTSPLLISSQT. Low complexity predominate over residues 97-108; sequence SYPSDLSSNSSI. Over residues 334–343 the composition is skewed to basic residues; the sequence is KRMKISHHSH. Over residues 344 to 379 the composition is skewed to low complexity; it reads SLSNNNENSLSQPYFNNNNNNNNENENVYNIVNEQN. Residues 380–390 show a composition bias toward polar residues; that stretch reads PTFNPNQSNTH. Residues 386-454 adopt a coiled-coil conformation; that stretch reads QSNTHQQQEE…ENENVICSEF (69 aa). Positions 602–664 form a DNA-binding region, homeobox; sequence EFKSRRILSE…NKRMRDKSNK (63 aa).

It is found in the nucleus. Functionally, putative transcription factor. The sequence is that of Homeobox protein 3 (hbx3) from Dictyostelium discoideum (Social amoeba).